The primary structure comprises 317 residues: MSITLSRPSLSRPSLSRHPSLTLHSSLSHAPPHHRPVAFLRHPTLRYHHHGRLLSVASAILQDTAIRQDTYIWTPVPISRVLPAAAESLFKVIVDLSRSPDLVYNFVSPGQYVQIRIPEAIVNPPPRPAYFYIASPPSLVKKNLEFEFLIRSVPGTTSEVLCSLKEGDVVDLTQIIGRGFDIEQILPPEDYPTVLISVTGYGMSAGRSFIEEGFGANKRSDVRLYYGAENLETMGYQERFKDWEASGVRVIPVLSRPPPNWNGAVGYVQDVYLKDKPIADPRTTGAVLIGNPNMVEETRGILVAQGVSREKILVTQD.

The disordered stretch occupies residues 1-29 (MSITLSRPSLSRPSLSRHPSLTLHSSLSH). The FAD-binding FR-type domain maps to 71-182 (YIWTPVPISR…TQIIGRGFDI (112 aa)).

This chain is Fruit protein pKIWI502, found in Actinidia deliciosa (Kiwi).